The sequence spans 1023 residues: Cell division cycle-associated protein 2 (1023 aa).

The span at 1 to 14 shows a compositional bias: basic and acidic residues; that stretch reads MDANSKDKPPETKE. Residues 1–21 are disordered; it reads MDANSKDKPPETKESAMNNAG. Residues S98, S120, S126, S131, S210, S291, and S309 each carry the phosphoserine modification. T312 carries the post-translational modification Phosphothreonine. One can recognise a PP1-binding domain in the interval 389 to 449; it reads KRKRVTFGED…PEPLPQPDFD (61 aa). Residues S400 and S407 each carry the phosphoserine modification. At T412 the chain carries Phosphothreonine. Phosphoserine is present on S437. A disordered region spans residues 542–580; that stretch reads SQETKCTKRALPKKSQVLKSCRKKKGKGKKSVQKSLYGE. A compositionally biased stretch (basic residues) spans 561–573; it reads SCRKKKGKGKKSV. 2 positions are modified to phosphoserine: S591 and S614. A disordered region spans residues 667 to 729; sequence SSLGNATSDE…ERVASDSPKP (63 aa). The segment covering 679 to 691 has biased composition (low complexity); it reads NTNIMNINENKNI. The span at 696–706 shows a compositional bias: basic and acidic residues; it reads NKSESENEPKA. Phosphoserine occurs at positions 710 and 756. A Glycyl lysine isopeptide (Lys-Gly) (interchain with G-Cter in SUMO2) cross-link involves residue K762. The span at 803–816 shows a compositional bias: basic and acidic residues; sequence ESKSQSEDLGRKPM. Disordered stretches follow at residues 803–860 and 936–1023; these read ESKS…GSSV and SPIK…ERKQ. 2 positions are modified to phosphoserine: S936 and S977. 2 stretches are compositionally biased toward polar residues: residues 979–992 and 1000–1010; these read CIST…TSQF and SLNGKGESSLT. At S1000 the chain carries Phosphoserine. The span at 1013-1023 shows a compositional bias: basic and acidic residues; that stretch reads ERIEHNGERKQ.

Interacts with PPP1CC. In terms of processing, phosphorylated by CDK1. May regulate its subcellular location. In terms of tissue distribution, ubiquitously expressed.

Its subcellular location is the nucleus. Its function is as follows. Regulator of chromosome structure during mitosis required for condensin-depleted chromosomes to retain their compact architecture through anaphase. Acts by mediating the recruitment of phopsphatase PP1-gamma subunit (PPP1CC) to chromatin at anaphase and into the following interphase. At anaphase onset, its association with chromatin targets a pool of PPP1CC to dephosphorylate substrates. The chain is Cell division cycle-associated protein 2 (CDCA2) from Homo sapiens (Human).